The following is a 451-amino-acid chain: MRECISIHIGQAGIQVGNACWELYCLEHGIQPDGQMPGDKTVGGGDDAFNTFFSETGAGKHVPRAVFVDLEPTVIDEVRTGAYRQLFHPEQLISGKEDAANNFARGHYTIGKEIVDLCLDRIRKLSDNCTGLQGFLVFNAVGGGTGSGLGSLLLERLSVDYGRKSKLGFTVYPSPQVSTSVVEPYNSVLSTHSLLEHTDVSILLDNEAIYDICRRSLDIERPTYTNLNRLVSQVISSLTASLRFDGALNVDVNEFQTNLVPYPRIHFMLSSYAPVISAEKAYHEQLSVAEITNSAFEPSSMMAKCDPRHGKYMACCLMYRGDVVPKDVNAAVATIKTKRTIQFVDWCPTGFKCGINYQPPGVVPGGDLAKVQRAVCMISNSTSVVEVFSRIDHKFDLMYAKRAFVHWYVGEGMEEGEFSEAREDLAALEKDYEEVGAEFDEGEDGDEGDEY.

Glutamine 11 contributes to the GTP binding site. Lysine 40 is modified (N6-acetyllysine). The GTP site is built by glutamate 71, glycine 144, threonine 145, threonine 179, asparagine 206, and asparagine 228. Glutamate 71 provides a ligand contact to Mg(2+). The active site involves glutamate 254.

It belongs to the tubulin family. In terms of assembly, dimer of alpha and beta chains. A typical microtubule is a hollow water-filled tube with an outer diameter of 25 nm and an inner diameter of 15 nM. Alpha-beta heterodimers associate head-to-tail to form protofilaments running lengthwise along the microtubule wall with the beta-tubulin subunit facing the microtubule plus end conferring a structural polarity. Microtubules usually have 13 protofilaments but different protofilament numbers can be found in some organisms and specialized cells. Mg(2+) serves as cofactor. Post-translationally, undergoes a tyrosination/detyrosination cycle, the cyclic removal and re-addition of a C-terminal tyrosine residue by the enzymes tubulin tyrosine carboxypeptidase (TTCP) and tubulin tyrosine ligase (TTL), respectively. Acetylation of alpha chains at Lys-40 stabilizes microtubules and affects affinity and processivity of microtubule motors. This modification has a role in multiple cellular functions, ranging from cell motility, cell cycle progression or cell differentiation to intracellular trafficking and signaling.

It localises to the cytoplasm. The protein localises to the cytoskeleton. The enzyme catalyses GTP + H2O = GDP + phosphate + H(+). Functionally, tubulin is the major constituent of microtubules, a cylinder consisting of laterally associated linear protofilaments composed of alpha- and beta-tubulin heterodimers. Microtubules grow by the addition of GTP-tubulin dimers to the microtubule end, where a stabilizing cap forms. Below the cap, tubulin dimers are in GDP-bound state, owing to GTPase activity of alpha-tubulin. The protein is Tubulin alpha chain (TUBA) of Triticum aestivum (Wheat).